Reading from the N-terminus, the 795-residue chain is Lon protease 1 (795 aa).

Residues 9–204 (LPVLPLRNTV…RVLALLLRDL (196 aa)) form the Lon N-terminal domain. 360-367 (GPPGVGKT) contributes to the ATP binding site. One can recognise a Lon proteolytic domain in the interval 596–777 (EPQVGAAQGL…GEVLKLLLLP (182 aa)). Residues Ser683 and Lys726 contribute to the active site.

This sequence belongs to the peptidase S16 family. As to quaternary structure, homohexamer. Organized in a ring with a central cavity.

The protein resides in the cytoplasm. It catalyses the reaction Hydrolysis of proteins in presence of ATP.. In terms of biological role, ATP-dependent serine protease that mediates the selective degradation of mutant and abnormal proteins as well as certain short-lived regulatory proteins. Required for cellular homeostasis and for survival from DNA damage and developmental changes induced by stress. Degrades polypeptides processively to yield small peptide fragments that are 5 to 10 amino acids long. Binds to DNA in a double-stranded, site-specific manner. The chain is Lon protease 1 from Thermus thermophilus (strain ATCC BAA-163 / DSM 7039 / HB27).